The following is a 308-amino-acid chain: Cytochrome b (308 aa).

Helical transmembrane passes span 1-21 (FGSLLGICLLTQIITGLLLAT), 45-66 (WLIRNLQANGASFFFICIYLHI), 81-101 (WNTGVILLLTLMATAFVGYVL), and 146-166 (FFALHFLLPFLIAGLTLIHFT). Heme b is bound at residue His65. The heme b site is built by His150 and His164. An a ubiquinone-binding site is contributed by His169. The next 3 membrane-spanning stretches (helical) occupy residues 194–214 (VKDILGFMFMLLPLTTLALFS), 256–276 (LGGVLALAASVLVLFLAPFLH), and 288–308 (LSQFLFWMLVANLLILTWVGS).

This sequence belongs to the cytochrome b family. The cytochrome bc1 complex contains 11 subunits: 3 respiratory subunits (MT-CYB, CYC1 and UQCRFS1), 2 core proteins (UQCRC1 and UQCRC2) and 6 low-molecular weight proteins (UQCRH/QCR6, UQCRB/QCR7, UQCRQ/QCR8, UQCR10/QCR9, UQCR11/QCR10 and a cleavage product of UQCRFS1). This cytochrome bc1 complex then forms a dimer. It depends on heme b as a cofactor.

It localises to the mitochondrion inner membrane. Component of the ubiquinol-cytochrome c reductase complex (complex III or cytochrome b-c1 complex) that is part of the mitochondrial respiratory chain. The b-c1 complex mediates electron transfer from ubiquinol to cytochrome c. Contributes to the generation of a proton gradient across the mitochondrial membrane that is then used for ATP synthesis. This chain is Cytochrome b (MT-CYB), found in Colaptes rupicola (Southern Andean flicker).